The chain runs to 336 residues: Phenylalanine--tRNA ligase alpha subunit (336 aa).

A Mg(2+)-binding site is contributed by glutamate 257.

The protein belongs to the class-II aminoacyl-tRNA synthetase family. Phe-tRNA synthetase alpha subunit type 1 subfamily. As to quaternary structure, tetramer of two alpha and two beta subunits. The cofactor is Mg(2+).

The protein localises to the cytoplasm. The catalysed reaction is tRNA(Phe) + L-phenylalanine + ATP = L-phenylalanyl-tRNA(Phe) + AMP + diphosphate + H(+). This chain is Phenylalanine--tRNA ligase alpha subunit, found in Xanthomonas campestris pv. campestris (strain 8004).